A 163-amino-acid polypeptide reads, in one-letter code: NADH-quinone oxidoreductase subunit I (163 aa).

2 4Fe-4S ferredoxin-type domains span residues 54–84 (LRRY…IESD) and 94–123 (TRYD…ETHI). Residues C64, C67, C70, C74, C103, C106, C109, and C113 each contribute to the [4Fe-4S] cluster site.

The protein belongs to the complex I 23 kDa subunit family. As to quaternary structure, NDH-1 is composed of 14 different subunits. Subunits NuoA, H, J, K, L, M, N constitute the membrane sector of the complex. It depends on [4Fe-4S] cluster as a cofactor.

The protein resides in the cell inner membrane. It carries out the reaction a quinone + NADH + 5 H(+)(in) = a quinol + NAD(+) + 4 H(+)(out). Its function is as follows. NDH-1 shuttles electrons from NADH, via FMN and iron-sulfur (Fe-S) centers, to quinones in the respiratory chain. The immediate electron acceptor for the enzyme in this species is believed to be ubiquinone. Couples the redox reaction to proton translocation (for every two electrons transferred, four hydrogen ions are translocated across the cytoplasmic membrane), and thus conserves the redox energy in a proton gradient. In Cupriavidus metallidurans (strain ATCC 43123 / DSM 2839 / NBRC 102507 / CH34) (Ralstonia metallidurans), this protein is NADH-quinone oxidoreductase subunit I.